A 356-amino-acid chain; its full sequence is Fructose import permease protein FruF (356 aa).

Transmembrane regions (helical) follow at residues 25–45, 77–97, 113–133, 180–200, 231–251, 268–290, and 308–328; these read IVAFILLVIICTIFQHDFLAL, LVISTAGIDLSVGSVMAVAGA, ILIALAVGLAIGCVNGALVSF, FILGIPANFVIAVIIVILVGL, ILFLVYAISGFLAAIAGLFAT, MYAILAVVIGGTSLLGGKFSLAG, and LGVNAEATPAFFAVVVIVICV.

The protein belongs to the binding-protein-dependent transport system permease family. In terms of assembly, the complex is composed of an ATP-binding protein (FruK), two transmembrane proteins (FruF and FruG) and a solute-binding protein (FruE).

It is found in the cell membrane. In terms of biological role, part of the high-affinity ABC transporter complex FruEKFG involved in fructose uptake. Can also transport ribose and xylose, with lower affinity. Probably responsible for the translocation of the substrate across the membrane. The protein is Fructose import permease protein FruF of Bifidobacterium longum (strain NCC 2705).